The sequence spans 201 residues: Molybdenum cofactor guanylyltransferase (201 aa).

Residues Leu-15 to Gly-17, Lys-28, Asp-74, and Asp-104 contribute to the GTP site. Asp-104 is a Mg(2+) binding site.

It belongs to the MobA family. Monomer. It depends on Mg(2+) as a cofactor.

Its subcellular location is the cytoplasm. It carries out the reaction Mo-molybdopterin + GTP + H(+) = Mo-molybdopterin guanine dinucleotide + diphosphate. Its function is as follows. Transfers a GMP moiety from GTP to Mo-molybdopterin (Mo-MPT) cofactor (Moco or molybdenum cofactor) to form Mo-molybdopterin guanine dinucleotide (Mo-MGD) cofactor. The polypeptide is Molybdenum cofactor guanylyltransferase (Pseudomonas syringae pv. syringae (strain B728a)).